The chain runs to 328 residues: Arabinose 5-phosphate isomerase KdsD (328 aa).

Residues 42–184 (CEKMFWCKGK…AVALLKARGF (143 aa)) form the SIS domain. Substrate-binding positions include 75 to 76 (GT), H82, H88, 114 to 123 (ALIPVLKRLH), 148 to 150 (KVA), T222, and D275. A Zn(2+)-binding site is contributed by H82. One can recognise a CBS 1 domain in the interval 210–268 (MHTGDEIPHVKKTASLRDALLEVTRKNLGMTVICDDNMMIEGIFTDGDLRRVFDMGVDV). Residues 277–328 (MTPGGIRVRPGILAVEALNLMQSRHITSVMVADGDHLLGVLHMHDLLRAGVV) form the CBS 2 domain.

Belongs to the SIS family. GutQ/KpsF subfamily. As to quaternary structure, homotetramer.

The catalysed reaction is D-arabinose 5-phosphate = D-ribulose 5-phosphate. It participates in carbohydrate biosynthesis; 3-deoxy-D-manno-octulosonate biosynthesis; 3-deoxy-D-manno-octulosonate from D-ribulose 5-phosphate: step 1/3. Its pathway is bacterial outer membrane biogenesis; lipopolysaccharide biosynthesis. Involved in the biosynthesis of 3-deoxy-D-manno-octulosonate (KDO), a unique 8-carbon sugar component of lipopolysaccharides (LPSs). Catalyzes the reversible aldol-ketol isomerization between D-ribulose 5-phosphate (Ru5P) and D-arabinose 5-phosphate (A5P). The sequence is that of Arabinose 5-phosphate isomerase KdsD (kdsD) from Escherichia coli O6:H1 (strain CFT073 / ATCC 700928 / UPEC).